Here is a 624-residue protein sequence, read N- to C-terminus: Outer dynein arm-docking complex subunit 4 (624 aa).

TPR repeat units follow at residues 11 to 44, 46 to 78, 79 to 112, 273 to 309, 318 to 351, 358 to 391, 395 to 428, and 435 to 468; these read FPSY…QSGD, NCLV…DPTF, CKGI…RPDR, LKSL…NQEE, GNLY…AKEH, SRAL…AKTT, TWLF…AEEE, and LNAS…AKLV. The interval 511–624 is disordered; sequence MSQMDLQGAS…VQKLEKTKEE (114 aa). Basic and acidic residues-rich tracts occupy residues 520 to 557, 576 to 588, and 595 to 624; these read SEKE…DRKS, IRRE…RRLS, and PSED…TKEE.

Component of the outer dynein arm-docking complex along with ODAD1, ODAD2, and ODAD3. Interacts with ODAD1; this interaction may facilitate the recruitment and/or attachment of outer dynein arm docking complex proteins, including ODAD1, ODAD3 and ODAD2, to ciliary axonemes. Interacts with components of the IFT complex A, including IFT140, TTC21B/IFT139 and WDR19/IFT144, and the IFT complex B, including IFT46, IFT52 and IFT57. Interacts with CFAP53.

Its subcellular location is the cell projection. The protein resides in the cilium. The protein localises to the cytoplasm. It localises to the cytoskeleton. It is found in the cilium axoneme. Its function is as follows. Component of the outer dynein arm-docking complex (ODA-DC) that mediates outer dynein arms (ODA) binding onto the doublet microtubule. Plays an essential role for the assembly of ODA-DC and for the docking of ODA in ciliary axoneme. The protein is Outer dynein arm-docking complex subunit 4 (Odad4) of Mus musculus (Mouse).